Here is a 154-residue protein sequence, read N- to C-terminus: DNA gyrase inhibitor (154 aa).

Belongs to the DNA gyrase inhibitor family. In terms of assembly, interacts with DNA gyrase.

It is found in the cytoplasm. Its function is as follows. Inhibits the supercoiling activity of DNA gyrase. Acts by inhibiting DNA gyrase at an early step, prior to (or at the step of) binding of DNA by the gyrase. It protects cells against toxins that target DNA gyrase, by inhibiting activity of these toxins and reducing the formation of lethal double-strand breaks in the cell. The sequence is that of DNA gyrase inhibitor from Pectobacterium carotovorum subsp. carotovorum (strain PC1).